A 351-amino-acid polypeptide reads, in one-letter code: Photosystem II D2 protein (351 aa).

Residues 39–59 form a helical membrane-spanning segment; it reads CAYLAVGGWLTGTTFVTSWYT. A chlorophyll a-binding site is contributed by His-116. A helical transmembrane segment spans residues 123–139; sequence GFCLRQFEIARLVGLRP. Residues Gln-128 and Asn-141 each coordinate pheophytin a. Residues 151 to 164 traverse the membrane as a helical segment; it reads VFVSVFLMYPLGQA. His-196 is a binding site for chlorophyll a. Residues 206–226 traverse the membrane as a helical segment; sequence GALLCAIHGATVQNTLFEDGD. The a plastoquinone site is built by His-213 and Phe-260. Residue His-213 participates in Fe cation binding. Position 267 (His-267) interacts with Fe cation. The helical transmembrane segment at 277–293 threads the bilayer; sequence GLWTSAFGIVGLALNLR.

Belongs to the reaction center PufL/M/PsbA/D family. PSII is composed of 1 copy each of membrane proteins PsbA, PsbB, PsbC, PsbD, PsbE, PsbF, PsbH, PsbI, PsbJ, PsbK, PsbL, PsbM, PsbT, PsbX, PsbY, PsbZ, Psb30/Ycf12, at least 3 peripheral proteins of the oxygen-evolving complex and a large number of cofactors. It forms dimeric complexes. It depends on The D1/D2 heterodimer binds P680, chlorophylls that are the primary electron donor of PSII, and subsequent electron acceptors. It shares a non-heme iron and each subunit binds pheophytin, quinone, additional chlorophylls, carotenoids and lipids. There is also a Cl(-1) ion associated with D1 and D2, which is required for oxygen evolution. The PSII complex binds additional chlorophylls, carotenoids and specific lipids. as a cofactor.

It localises to the plastid. It is found in the chloroplast thylakoid membrane. The enzyme catalyses 2 a plastoquinone + 4 hnu + 2 H2O = 2 a plastoquinol + O2. Its function is as follows. Photosystem II (PSII) is a light-driven water:plastoquinone oxidoreductase that uses light energy to abstract electrons from H(2)O, generating O(2) and a proton gradient subsequently used for ATP formation. It consists of a core antenna complex that captures photons, and an electron transfer chain that converts photonic excitation into a charge separation. The D1/D2 (PsbA/PsbD) reaction center heterodimer binds P680, the primary electron donor of PSII as well as several subsequent electron acceptors. D2 is needed for assembly of a stable PSII complex. This Porphyra purpurea (Red seaweed) protein is Photosystem II D2 protein.